Here is a 299-residue protein sequence, read N- to C-terminus: Trimeric intracellular cation channel type A (299 aa).

Residues 1 to 18 (MELLSALSLGELALSFSR) lie on the Lumenal side of the membrane. The chain crosses the membrane as a helical span at residues 19-39 (VPLFPVFDLSYFIVSILYLKY). The Cytoplasmic portion of the chain corresponds to 40–51 (EPGAVELSRRHP). Residues 52 to 72 (IASWLCAMLHCFGSYILADLL) form a helical membrane-spanning segment. Over 73 to 85 (LGEPLIDYFSNNS) the chain is Lumenal. Gly-74 contributes to the Ca(2+) binding site. The chain crosses the membrane as a helical span at residues 86–106 (SILLASAVWYLIFFCPLDLFY). Over 107–144 (KCVCFLPVKLIFVAMKEVVRVRKIAVGIHHAHHHYHHG) the chain is Cytoplasmic. Lys-122 and Arg-126 together coordinate a 1,2-diacyl-sn-glycero-3-phospho-(1D-myo-inositol-4,5-bisphosphate). The chain crosses the membrane as a helical span at residues 145–165 (WFVMIATGWVKGSGVALMSNF). At 166 to 178 (EQLLRGVWKPETN) the chain is on the lumenal side. The chain crosses the membrane as a helical span at residues 179-199 (EILHMSFPTKASLYGAILFTL). The Cytoplasmic segment spans residues 200–209 (QQTRWLPVSK). A helical membrane pass occupies residues 210 to 230 (ASLIFIFTLFMVSCKVFLTAT). Over 231–234 (HSHS) the chain is Lumenal. Residues 235–255 (SPFDALEGYICPVLFGSACGG) traverse the membrane as a helical segment. Residues 256-299 (DHHHDNHGGSHSGGGPGAQHSAMPAKSKEELSEGSRKKKAKKAD) are Cytoplasmic-facing. The segment at 260–299 (DNHGGSHSGGGPGAQHSAMPAKSKEELSEGSRKKKAKKAD) is disordered. Residues 281-290 (KSKEELSEGS) show a composition bias toward basic and acidic residues.

This sequence belongs to the TMEM38 family. As to quaternary structure, homotrimer; conformation seems to be controled by binding to diacylglycerol (DAG).

Its subcellular location is the sarcoplasmic reticulum membrane. It localises to the nucleus membrane. The enzyme catalyses K(+)(in) = K(+)(out). With respect to regulation, channel activity is activated by a change of voltage within the sarcoplasmic reticulum lumen and blocked by luminal high Ca(2+) levels. Functionally, intracellular monovalent cation channel required for maintenance of rapid intracellular calcium release. Acts as a potassium counter-ion channel that functions in synchronization with calcium release from intracellular stores. Opened by a change of voltage within the sarcoplasmic reticulum lumen. This chain is Trimeric intracellular cation channel type A, found in Homo sapiens (Human).